The chain runs to 150 residues: Protein-export protein SecB (150 aa).

It belongs to the SecB family. As to quaternary structure, homotetramer, a dimer of dimers. One homotetramer interacts with 1 SecA dimer.

It localises to the cytoplasm. Functionally, one of the proteins required for the normal export of preproteins out of the cell cytoplasm. It is a molecular chaperone that binds to a subset of precursor proteins, maintaining them in a translocation-competent state. It also specifically binds to its receptor SecA. The polypeptide is Protein-export protein SecB (Chromobacterium violaceum (strain ATCC 12472 / DSM 30191 / JCM 1249 / CCUG 213 / NBRC 12614 / NCIMB 9131 / NCTC 9757 / MK)).